Reading from the N-terminus, the 368-residue chain is Chorismate synthase (368 aa).

Residues arginine 48 and arginine 54 each coordinate NADP(+). FMN-binding positions include 131-133 (RSS), 243-244 (NA), glycine 292, 307-311 (KPTSS), and arginine 333.

Belongs to the chorismate synthase family. In terms of assembly, homotetramer. Requires FMNH2 as cofactor.

It catalyses the reaction 5-O-(1-carboxyvinyl)-3-phosphoshikimate = chorismate + phosphate. Its pathway is metabolic intermediate biosynthesis; chorismate biosynthesis; chorismate from D-erythrose 4-phosphate and phosphoenolpyruvate: step 7/7. Functionally, catalyzes the anti-1,4-elimination of the C-3 phosphate and the C-6 proR hydrogen from 5-enolpyruvylshikimate-3-phosphate (EPSP) to yield chorismate, which is the branch point compound that serves as the starting substrate for the three terminal pathways of aromatic amino acid biosynthesis. This reaction introduces a second double bond into the aromatic ring system. The sequence is that of Chorismate synthase from Nitrobacter winogradskyi (strain ATCC 25391 / DSM 10237 / CIP 104748 / NCIMB 11846 / Nb-255).